A 1169-amino-acid chain; its full sequence is DNA-directed RNA polymerase subunit beta (1169 aa).

This sequence belongs to the RNA polymerase beta chain family. In terms of assembly, the RNAP catalytic core consists of 2 alpha, 1 beta, 1 beta' and 1 omega subunit. When a sigma factor is associated with the core the holoenzyme is formed, which can initiate transcription. Interacts with RbpA, which partially restores Rif-inhibited transcription.

It carries out the reaction RNA(n) + a ribonucleoside 5'-triphosphate = RNA(n+1) + diphosphate. DNA-dependent RNA polymerase catalyzes the transcription of DNA into RNA using the four ribonucleoside triphosphates as substrates. This subunit often mutates to generate rifampicin (Rif) resistance. Interaction with RbpA partially restores Rif-inhibited transcription; once the subunit is Rif-resistant however RbpA no longer stimulates transcription. The protein is DNA-directed RNA polymerase subunit beta of Mycolicibacterium smegmatis (strain ATCC 700084 / mc(2)155) (Mycobacterium smegmatis).